A 432-amino-acid polypeptide reads, in one-letter code: C(50) beta-cyclic carotenoids biosynthesis protein LbtBC (432 aa).

Residues 1–140 (MTSLYTTLNL…DDDEVRTPER (140 aa)) are beta-cyclase. A run of 3 helical transmembrane segments spans residues 4-24 (LYTT…LLAA), 36-56 (LIGV…FDNI), and 83-103 (FAYA…LTAS). The segment at 111–140 (GSPTVSGRGDALLTRAPEPGDDDEVRTPER) is disordered. Positions 141 to 432 (PGTPGLLTTL…IVLWSVLVWS (292 aa)) are elongase/hydratase. 7 helical membrane passes run 170 to 190 (YFLA…FFLV), 252 to 272 (ESSL…AKGL), 277 to 297 (IPFL…IVGW), 299 to 319 (IAGA…MLWG), 350 to 370 (AAVW…LAAA), 374 to 394 (ASGA…YVGV), and 409 to 429 (FLVL…WSVL).

It belongs to the UbiA prenyltransferase family. In terms of assembly, may form a complex with LbtA.

The protein localises to the cell membrane. The catalysed reaction is all-trans-lycopene + dimethylallyl diphosphate + H2O = dihydroisopentenyldehydrorhodopin + diphosphate. It catalyses the reaction isopentenyldehydrorhodopin + dimethylallyl diphosphate + H2O = dihydrobisanhydrobacterioruberin + diphosphate. It functions in the pathway carotenoid biosynthesis. Involved in the biosynthesis of C(50) beta-cyclic carotenoids. The elongase/hydratase domain catalyzes the elongation of lycopene by attaching a C(5) isoprene unit at C-2, as well as the hydroxylation of the previous end of the molecule. The enzyme acts at both ends of the substrate, and catalyzes the conversion of lycopene to the C(45) intermediate dihydroisopentenyldehydrorhodopin (DH-IDR) and the conversion of isopentenyldehydrorhodopin (IDR) to the C(50) carotenoid dihydrobisanhydrobacterioruberin (DH-BABR). The beta-cyclase domain may produce the C(50) beta-cyclic carotenoid C.p.450 from the C(50) carotenoid dihydrobisanhydrobacterioruberin (DH-BABR). The chain is C(50) beta-cyclic carotenoids biosynthesis protein LbtBC from Dietzia sp. (strain CQ4).